A 112-amino-acid polypeptide reads, in one-letter code: Large ribosomal subunit protein mL53 (112 aa).

It belongs to the mitochondrion-specific ribosomal protein mL53 family. As to quaternary structure, component of the mitochondrial ribosome large subunit (39S) which comprises a 16S rRNA and about 50 distinct proteins.

It localises to the mitochondrion. This is Large ribosomal subunit protein mL53 (MRPL53) from Bos taurus (Bovine).